A 145-amino-acid chain; its full sequence is MVDLARRCSGSTEGRFLMWECTKWCGPGNNAKCESDLGPLEADKCCRTHDHCDYIASGETKYGITNYAFFTKLNCKCEEAFDRCLTEAYNKEEKESAKSSTKRLQNFYFGTYSPECYVVTCNSKRSGRDAGCENGVATWKKSYKD.

An N-terminal signal peptide occupies residues 1-15 (MVDLARRCSGSTEGR). The Ca(2+) site is built by W24, G26, and G28. 5 disulfide bridges follow: C25–C46, C45–C84, C52–C77, C75–C116, and C121–C132. H49 is a catalytic residue. D50 contacts Ca(2+). The propeptide occupies 124–128 (KRSGR).

The protein belongs to the phospholipase A2 family. Group III subfamily. In terms of assembly, heterodimer composed of a small subunit and a large subunit; disulfid-linked. Requires Ca(2+) as cofactor. In terms of tissue distribution, expressed by the venom gland.

It localises to the secreted. The catalysed reaction is a 1,2-diacyl-sn-glycero-3-phosphocholine + H2O = a 1-acyl-sn-glycero-3-phosphocholine + a fatty acid + H(+). Its function is as follows. Scorpion venom phospholipase A2 (PLA2) that contains enzymatic activity, but does not inhibit ryanodine receptors in contrary to imperatoxin-1, another heterodimer of P.imperator venom. PLA2 catalyzes the calcium-dependent hydrolysis of the 2-acyl groups in 3-sn-phosphoglycerides. The protein is Phospholipase A2 phospholipin of Pandinus imperator (Emperor scorpion).